The primary structure comprises 142 residues: COA8 family protein Y39B6A.34, mitochondrial (142 aa).

It belongs to the COA8 family.

It is found in the mitochondrion inner membrane. Functionally, may be required for cytochrome c complex (COX) assembly and function, COX being the terminal component of the mitochondrial respiratory chain. The chain is COA8 family protein Y39B6A.34, mitochondrial from Caenorhabditis elegans.